We begin with the raw amino-acid sequence, 317 residues long: Pinoresinol reductase 2 (317 aa).

Positions 18, 20, 21, 41, 50, 90, 91, 95, 98, and 121 each coordinate NADP(+). Met125 contributes to the (-)-pinoresinol binding site. Lys144 and Phe166 together coordinate NADP(+). Catalysis depends on Lys144, which acts as the Proton acceptor. Gly178 is a binding site for (-)-pinoresinol.

Belongs to the NmrA-type oxidoreductase family. Isoflavone reductase subfamily. As to quaternary structure, forms homodimers. Expressed in roots. Detected in stems.

The catalysed reaction is (-)-lariciresinol + NADP(+) = (-)-pinoresinol + NADPH + H(+). Reductase involved in lignan biosynthesis. Unlike conventional pinoresinol reductases that can reduce both pinoresinol and lariciresinol, PRR2 shows a strict substrate selectivity for (-)-pinoresinol. No activity with (+)-pinoresinol or lariciresinol. Abstracts the 4R-hydride from the NADPH cofactor during catalysis. The chain is Pinoresinol reductase 2 from Arabidopsis thaliana (Mouse-ear cress).